Here is a 169-residue protein sequence, read N- to C-terminus: Ecotin (169 aa).

The first 21 residues, M1 to A21, serve as a signal peptide directing secretion. A disulfide bridge links C76 with C113.

The protein belongs to the protease inhibitor I11 (ecotin) family. In terms of assembly, homodimer.

It localises to the periplasm. Functionally, general inhibitor of pancreatic serine proteases: inhibits chymotrypsin, trypsin, elastases, factor X, kallikrein as well as a variety of other proteases. In Yersinia pseudotuberculosis serotype O:1b (strain IP 31758), this protein is Ecotin.